The sequence spans 141 residues: MAKKVIGQIKLQIPAGKATPAPPVGPALGQHGVNIMGFTKEFNAKTADQAGMIIPVVITVYQDRSFSFITKTPPAAVLIKKALNLKSGSGEPNKKKVAKMTSAQVREIAELKMPDLNAASVEAAMSMIAGTARSMGVVIED.

It belongs to the universal ribosomal protein uL11 family. In terms of assembly, part of the ribosomal stalk of the 50S ribosomal subunit. Interacts with L10 and the large rRNA to form the base of the stalk. L10 forms an elongated spine to which L12 dimers bind in a sequential fashion forming a multimeric L10(L12)X complex. In terms of processing, one or more lysine residues are methylated.

In terms of biological role, forms part of the ribosomal stalk which helps the ribosome interact with GTP-bound translation factors. In Clostridioides difficile (strain 630) (Peptoclostridium difficile), this protein is Large ribosomal subunit protein uL11.